Consider the following 890-residue polypeptide: Leucine--tRNA ligase (890 aa).

The 'HIGH' region motif lies at 48–58 (PYPSGKLHMGH). The short motif at 645–649 (KMSKS) is the 'KMSKS' region element. K648 lines the ATP pocket.

This sequence belongs to the class-I aminoacyl-tRNA synthetase family.

Its subcellular location is the cytoplasm. It carries out the reaction tRNA(Leu) + L-leucine + ATP = L-leucyl-tRNA(Leu) + AMP + diphosphate. This chain is Leucine--tRNA ligase, found in Polynucleobacter necessarius subsp. necessarius (strain STIR1).